Here is a 452-residue protein sequence, read N- to C-terminus: Septin-10 (452 aa).

A Septin-type G domain is found at 36–302 (QGFCFNILCV…ELYRRCKLQE (267 aa)). The tract at residues 46–53 (GETGIGKS) is G1 motif. Residues 46-53 (GETGIGKS), G101, 182-190 (KADTISKSE), G236, and R251 contribute to the GTP site. The interval 98–101 (NTVG) is G3 motif. A G4 motif region spans residues 181–184 (AKAD). At S414 the chain carries Phosphoserine.

It belongs to the TRAFAC class TrmE-Era-EngA-EngB-Septin-like GTPase superfamily. Septin GTPase family. As to quaternary structure, septins polymerize into heterooligomeric protein complexes that form filaments, and can associate with cellular membranes, actin filaments and microtubules. GTPase activity is required for filament formation. Interacts with ADGB. Post-translationally, proteolytically cleaved in vitro in a calmodulin-dependent manner.

Its subcellular location is the cytoplasm. The protein localises to the cytoskeleton. It localises to the cell projection. The protein resides in the cilium. It is found in the flagellum. Its function is as follows. Filament-forming cytoskeletal GTPase. May play a role in cytokinesis (Potential). This chain is Septin-10, found in Mus musculus (Mouse).